The following is a 103-amino-acid chain: N(4)-acetylcytidine amidohydrolase (103 aa).

The ASCH domain occupies 6–94; the sequence is ITFFQRFQND…IAEIYPNQTQ (89 aa). The Proton acceptor role is filled by Lys21. Thr24 acts as the Nucleophile in catalysis. Glu74 (proton donor) is an active-site residue.

The protein belongs to the N(4)-acetylcytidine amidohydrolase family.

It carries out the reaction N(4)-acetylcytidine + H2O = cytidine + acetate + H(+). The enzyme catalyses N(4)-acetyl-2'-deoxycytidine + H2O = 2'-deoxycytidine + acetate + H(+). The catalysed reaction is N(4)-acetylcytosine + H2O = cytosine + acetate + H(+). Catalyzes the hydrolysis of N(4)-acetylcytidine (ac4C). This Salmonella schwarzengrund (strain CVM19633) protein is N(4)-acetylcytidine amidohydrolase (yqfB).